Consider the following 188-residue polypeptide: Elongation factor P (188 aa).

The protein belongs to the elongation factor P family.

Its subcellular location is the cytoplasm. Its pathway is protein biosynthesis; polypeptide chain elongation. Involved in peptide bond synthesis. Stimulates efficient translation and peptide-bond synthesis on native or reconstituted 70S ribosomes in vitro. Probably functions indirectly by altering the affinity of the ribosome for aminoacyl-tRNA, thus increasing their reactivity as acceptors for peptidyl transferase. This chain is Elongation factor P, found in Rickettsia africae (strain ESF-5).